A 453-amino-acid chain; its full sequence is Cysteine--tRNA ligase (453 aa).

Cys-31 contributes to the Zn(2+) binding site. A 'HIGH' region motif is present at residues 33-43; it reads PTVYDNPHIGN. Residues Cys-213, His-238, and Glu-242 each coordinate Zn(2+). The 'KMSKS' region signature appears at 271–275; that stretch reads KMAKS. ATP is bound at residue Lys-274.

The protein belongs to the class-I aminoacyl-tRNA synthetase family. As to quaternary structure, monomer. The cofactor is Zn(2+).

It localises to the cytoplasm. It catalyses the reaction tRNA(Cys) + L-cysteine + ATP = L-cysteinyl-tRNA(Cys) + AMP + diphosphate. The sequence is that of Cysteine--tRNA ligase from Pelagibacter ubique (strain HTCC1062).